Reading from the N-terminus, the 243-residue chain is Tryptophan synthase alpha chain (243 aa).

Catalysis depends on proton acceptor residues Glu-31 and Asp-42.

Belongs to the TrpA family. In terms of assembly, tetramer of two alpha and two beta chains.

The enzyme catalyses (1S,2R)-1-C-(indol-3-yl)glycerol 3-phosphate + L-serine = D-glyceraldehyde 3-phosphate + L-tryptophan + H2O. It participates in amino-acid biosynthesis; L-tryptophan biosynthesis; L-tryptophan from chorismate: step 5/5. Its function is as follows. The alpha subunit is responsible for the aldol cleavage of indoleglycerol phosphate to indole and glyceraldehyde 3-phosphate. This chain is Tryptophan synthase alpha chain, found in Staphylococcus epidermidis (strain ATCC 35984 / DSM 28319 / BCRC 17069 / CCUG 31568 / BM 3577 / RP62A).